The sequence spans 449 residues: MARRARRPRGRFYAFRRGRWHHLKRLRRRYKFRHRRRQRYRRRAFRKAFHNPRPGTYSVRLPNPQSTMTIRFQGVIFLTEGLILPKNSTAGGYADHMYGARVAKISVNLKEFLLASMNLTYVSKIGGPIAGELIADGSKSQAAENWPNCWLPLDNNVPSATPSAWWRWALMMMQPTDSCRFFNHPKQMTLQDMGRMFGGWHLFRHIETRFQLLATKNEGSFSPVASLLSQGEYLTRRDDVKYSSDHQNRWRKGEQPMTGGIAYATGKMRLDEQQYPAMPPDPPIITTTTAQGTQVRCMNSTQAWWSWDTYMSFATLTALGAQWSFPPGQRSVSRRSFNHHKARGAGDPKGQRWHTLVPLGTETITDSYMRAPASELDTNFFTLYVAQGTNKSQQYKFGTATYALKEPVMKSDSWAVVRVQSVWQLGNRQRPYPWDVNWANSTMYWGSQP.

The segment at 1 to 43 (MARRARRPRGRFYAFRRGRWHHLKRLRRRYKFRHRRRQRYRRR) is DNA-binding. Residues 6-47 (RRPRGRFYAFRRGRWHHLKRLRRRYKFRHRRRQRYRRRAFRK) are nuclear localization signals.

The protein belongs to the gyrovirus capsid protein family. As to quaternary structure, homomultimer (Potential). Interacts with Rep; this interaction relocates Rep into the nucleus.

The protein resides in the host nucleus. It is found in the virion. In terms of biological role, self-assembles to form the virion icosahedral capsid with a T=1 symmetry. This very small capsid (25 nm in diameter) allows the virus to be very stable in the environment and resistant to some disinfectants, including detergents. Essential for the initial attachment to host receptors. After attachment, the virus is endocytosed and traffics to the nucleus. The capsid protein binds and transports the viral genome and Rep across the nuclear envelope. This chain is Capsid protein (VP1), found in Gallus gallus (Chicken).